Here is a 119-residue protein sequence, read N- to C-terminus: NADH-quinone oxidoreductase subunit A (119 aa).

3 helical membrane passes run F7–G27, L63–V83, and I88–A108.

This sequence belongs to the complex I subunit 3 family. In terms of assembly, NDH-1 is composed of 14 different subunits. Subunits NuoA, H, J, K, L, M, N constitute the membrane sector of the complex.

It localises to the cell inner membrane. It carries out the reaction a quinone + NADH + 5 H(+)(in) = a quinol + NAD(+) + 4 H(+)(out). NDH-1 shuttles electrons from NADH, via FMN and iron-sulfur (Fe-S) centers, to quinones in the respiratory chain. The immediate electron acceptor for the enzyme in this species is believed to be ubiquinone. Couples the redox reaction to proton translocation (for every two electrons transferred, four hydrogen ions are translocated across the cytoplasmic membrane), and thus conserves the redox energy in a proton gradient. The protein is NADH-quinone oxidoreductase subunit A of Paraburkholderia phytofirmans (strain DSM 17436 / LMG 22146 / PsJN) (Burkholderia phytofirmans).